The sequence spans 281 residues: 4-diphosphocytidyl-2-C-methyl-D-erythritol kinase (281 aa).

Lys-15 is an active-site residue. An ATP-binding site is contributed by 98–108 (PTGAGLGGGSS). The active site involves Asp-140.

The protein belongs to the GHMP kinase family. IspE subfamily.

It carries out the reaction 4-CDP-2-C-methyl-D-erythritol + ATP = 4-CDP-2-C-methyl-D-erythritol 2-phosphate + ADP + H(+). The protein operates within isoprenoid biosynthesis; isopentenyl diphosphate biosynthesis via DXP pathway; isopentenyl diphosphate from 1-deoxy-D-xylulose 5-phosphate: step 3/6. Its function is as follows. Catalyzes the phosphorylation of the position 2 hydroxy group of 4-diphosphocytidyl-2C-methyl-D-erythritol. This Neisseria gonorrhoeae (strain ATCC 700825 / FA 1090) protein is 4-diphosphocytidyl-2-C-methyl-D-erythritol kinase.